The following is a 732-amino-acid chain: Translation initiation factor eIF2B subunit epsilon (732 aa).

The W2 domain maps to glycine 559–glutamate 726.

The protein belongs to the eIF-2B gamma/epsilon subunits family. In terms of assembly, component of the translation initiation factor 2B (eIF2B) complex which is a heterodecamer of two sets of five different subunits: alpha, beta, gamma, delta and epsilon. Subunits alpha, beta and delta comprise a regulatory subcomplex and subunits epsilon and gamma comprise a catalytic subcomplex. Within the complex, the hexameric regulatory complex resides at the center, with the two heterodimeric catalytic subcomplexes bound on opposite sides.

The protein localises to the cytoplasm. Its subcellular location is the cytosol. In terms of biological role, acts as a component of the translation initiation factor 2B (eIF2B) complex, which catalyzes the exchange of GDP for GTP on the eukaryotic initiation factor 2 (eIF2) complex gamma subunit. Its guanine nucleotide exchange factor activity is repressed when bound to eIF2 complex phosphorylated on the alpha subunit, thereby limiting the amount of methionyl-initiator methionine tRNA available to the ribosome and consequently global translation is repressed. This is Translation initiation factor eIF2B subunit epsilon (GCD6) from Candida albicans (strain SC5314 / ATCC MYA-2876) (Yeast).